The primary structure comprises 433 residues: Serine hydroxymethyltransferase (433 aa).

121–123 (AHV) provides a ligand contact to (6S)-5,6,7,8-tetrahydrofolate. Residue K227 is modified to N6-(pyridoxal phosphate)lysine. E243 provides a ligand contact to (6S)-5,6,7,8-tetrahydrofolate.

Belongs to the SHMT family. In terms of assembly, homodimer. Pyridoxal 5'-phosphate serves as cofactor.

It localises to the cytoplasm. The protein operates within amino-acid biosynthesis; glycine biosynthesis; glycine from L-serine: step 1/1. Functionally, catalyzes the reversible interconversion of serine and glycine with a modified folate serving as the one-carbon carrier. Also exhibits a pteridine-independent aldolase activity toward beta-hydroxyamino acids, producing glycine and aldehydes, via a retro-aldol mechanism. This is Serine hydroxymethyltransferase from Saccharolobus islandicus (strain Y.G.57.14 / Yellowstone #1) (Sulfolobus islandicus).